Consider the following 171-residue polypeptide: Phosphopantetheine adenylyltransferase (171 aa).

Substrate is bound at residue threonine 9. ATP is bound by residues 9–10 (TF) and histidine 17. Substrate contacts are provided by lysine 41, leucine 73, and arginine 87. ATP-binding positions include 88–90 (GLR), glutamate 98, and 123–129 (YQFISGT).

This sequence belongs to the bacterial CoaD family. As to quaternary structure, homohexamer. Requires Mg(2+) as cofactor.

It localises to the cytoplasm. It catalyses the reaction (R)-4'-phosphopantetheine + ATP + H(+) = 3'-dephospho-CoA + diphosphate. It functions in the pathway cofactor biosynthesis; coenzyme A biosynthesis; CoA from (R)-pantothenate: step 4/5. Functionally, reversibly transfers an adenylyl group from ATP to 4'-phosphopantetheine, yielding dephospho-CoA (dPCoA) and pyrophosphate. In Paraburkholderia phytofirmans (strain DSM 17436 / LMG 22146 / PsJN) (Burkholderia phytofirmans), this protein is Phosphopantetheine adenylyltransferase.